The primary structure comprises 150 residues: Ribosomal RNA large subunit methyltransferase H (150 aa).

Residues Ala100 and 118 to 123 (LSEMTF) contribute to the S-adenosyl-L-methionine site.

The protein belongs to the RNA methyltransferase RlmH family. Homodimer.

The protein resides in the cytoplasm. It carries out the reaction pseudouridine(1915) in 23S rRNA + S-adenosyl-L-methionine = N(3)-methylpseudouridine(1915) in 23S rRNA + S-adenosyl-L-homocysteine + H(+). Its function is as follows. Specifically methylates the pseudouridine at position 1915 (m3Psi1915) in 23S rRNA. The sequence is that of Ribosomal RNA large subunit methyltransferase H from Helicobacter pylori (strain P12).